The primary structure comprises 104 residues: SOSS complex subunit C (104 aa).

Ala2 carries the N-acetylalanine modification.

Belongs to the SOSS-C family. Component of the SOSS complex, composed of SOSS-B (SOSS-B1/NABP2 or SOSS-B2/NABP1), SOSS-A/INTS3 and SOSS-C/INIP. SOSS complexes containing SOSS-B1/NABP2 are more abundant than complexes containing SOSS-B2/NABP1. Interacts with INTS3; the interaction is direct.

The protein resides in the nucleus. Component of the SOSS complex, a multiprotein complex that functions downstream of the MRN complex to promote DNA repair and G2/M checkpoint. The SOSS complex associates with single-stranded DNA at DNA lesions and influences diverse endpoints in the cellular DNA damage response including cell-cycle checkpoint activation, recombinational repair and maintenance of genomic stability. Required for efficient homologous recombination-dependent repair of double-strand breaks (DSBs) and ATM-dependent signaling pathways. This Bos taurus (Bovine) protein is SOSS complex subunit C (INIP).